Here is a 443-residue protein sequence, read N- to C-terminus: Ribosomal protein uS12 methylthiotransferase RimO (443 aa).

The 111-residue stretch at 10–120 (PRVGFVSLGC…VMAAVHAQCP (111 aa)) folds into the MTTase N-terminal domain. The [4Fe-4S] cluster site is built by C19, C55, C84, C152, C156, and C159. A Radical SAM core domain is found at 138-375 (LTPRHYAYLK…MALQAEISAR (238 aa)). Residues 378 to 443 (ARRVGTECTV…DEHDLYGRVL (66 aa)) enclose the TRAM domain.

The protein belongs to the methylthiotransferase family. RimO subfamily. It depends on [4Fe-4S] cluster as a cofactor.

It is found in the cytoplasm. It catalyses the reaction L-aspartate(89)-[ribosomal protein uS12]-hydrogen + (sulfur carrier)-SH + AH2 + 2 S-adenosyl-L-methionine = 3-methylsulfanyl-L-aspartate(89)-[ribosomal protein uS12]-hydrogen + (sulfur carrier)-H + 5'-deoxyadenosine + L-methionine + A + S-adenosyl-L-homocysteine + 2 H(+). Catalyzes the methylthiolation of an aspartic acid residue of ribosomal protein uS12. This is Ribosomal protein uS12 methylthiotransferase RimO from Alkalilimnicola ehrlichii (strain ATCC BAA-1101 / DSM 17681 / MLHE-1).